A 239-amino-acid chain; its full sequence is Uridylate kinase (239 aa).

10-13 (KISG) provides a ligand contact to ATP. The segment at 18-23 (GEAGFG) is involved in allosteric activation by GTP. G52 is a binding site for UMP. Residues G53 and R57 each coordinate ATP. Residues D72 and 133–140 (TGNPYFST) contribute to the UMP site. Residues N161, Y167, and D170 each coordinate ATP.

It belongs to the UMP kinase family. In terms of assembly, homohexamer.

It is found in the cytoplasm. The enzyme catalyses UMP + ATP = UDP + ADP. It participates in pyrimidine metabolism; CTP biosynthesis via de novo pathway; UDP from UMP (UMPK route): step 1/1. Its activity is regulated as follows. Allosterically activated by GTP. Inhibited by UTP. In terms of biological role, catalyzes the reversible phosphorylation of UMP to UDP. This Lacticaseibacillus paracasei (strain ATCC 334 / BCRC 17002 / CCUG 31169 / CIP 107868 / KCTC 3260 / NRRL B-441) (Lactobacillus paracasei) protein is Uridylate kinase.